We begin with the raw amino-acid sequence, 371 residues long: Queuine tRNA-ribosyltransferase (371 aa).

Asp90 acts as the Proton acceptor in catalysis. Residues 90 to 94 (DSGGF), Asp144, Gln189, and Gly215 each bind substrate. Residues 246–252 (GVGTPEN) are RNA binding. Asp265 serves as the catalytic Nucleophile. Residues 270 to 274 (TRNAR) form an RNA binding; important for wobble base 34 recognition region. 4 residues coordinate Zn(2+): Cys303, Cys305, Cys308, and His334.

It belongs to the queuine tRNA-ribosyltransferase family. As to quaternary structure, homodimer. Within each dimer, one monomer is responsible for RNA recognition and catalysis, while the other monomer binds to the replacement base PreQ1. The cofactor is Zn(2+).

It catalyses the reaction 7-aminomethyl-7-carbaguanine + guanosine(34) in tRNA = 7-aminomethyl-7-carbaguanosine(34) in tRNA + guanine. The protein operates within tRNA modification; tRNA-queuosine biosynthesis. Functionally, catalyzes the base-exchange of a guanine (G) residue with the queuine precursor 7-aminomethyl-7-deazaguanine (PreQ1) at position 34 (anticodon wobble position) in tRNAs with GU(N) anticodons (tRNA-Asp, -Asn, -His and -Tyr). Catalysis occurs through a double-displacement mechanism. The nucleophile active site attacks the C1' of nucleotide 34 to detach the guanine base from the RNA, forming a covalent enzyme-RNA intermediate. The proton acceptor active site deprotonates the incoming PreQ1, allowing a nucleophilic attack on the C1' of the ribose to form the product. After dissociation, two additional enzymatic reactions on the tRNA convert PreQ1 to queuine (Q), resulting in the hypermodified nucleoside queuosine (7-(((4,5-cis-dihydroxy-2-cyclopenten-1-yl)amino)methyl)-7-deazaguanosine). This is Queuine tRNA-ribosyltransferase from Helicobacter acinonychis (strain Sheeba).